Here is a 575-residue protein sequence, read N- to C-terminus: Transport inhibitor response 1-like protein Os04g0395600 (575 aa).

An F-box domain is found at 1–45; it reads MTYFPEEVVEHIFSFLPAQRDRNTVSLVCKVWYEIERLSRRGVFV. Lys69 contributes to the 1D-myo-inositol hexakisphosphate binding site. An interaction with auxin-responsive proteins region spans residues 76 to 77; it reads DF. Residues 108–109 and Arg340 each bind 1D-myo-inositol hexakisphosphate; that span reads KR. An interaction with auxin-responsive proteins region spans residues 343 to 348; it reads PSDFYV. 396 to 398 is a 1D-myo-inositol hexakisphosphate binding site; that stretch reads RFR. An interaction with auxin-responsive proteins region spans residues 400 to 404; that stretch reads CILEP. Arg431 contributes to the 1D-myo-inositol hexakisphosphate binding site. The segment at 459–460 is interaction with auxin-responsive proteins; the sequence is AF. 1D-myo-inositol hexakisphosphate contacts are provided by residues 479-480 and Arg504; that span reads RK.

Part of a SCF (SKP1-cullin-F-box) protein ligase complex. May interact with auxin and auxin-responsive proteins.

The protein resides in the nucleus. It functions in the pathway protein modification; protein ubiquitination. This is Transport inhibitor response 1-like protein Os04g0395600 from Oryza sativa subsp. japonica (Rice).